Here is a 283-residue protein sequence, read N- to C-terminus: MNAPRLLVDIGNTRLKWAWCEAGAPLPASTGTTVLPTPWQHAGAVAHAADGALRTLAAELRALRAGGPMPSVWISNVAGPVIAAAVDAALADAFGGCAPVQWVRSAAAHGDLVNGYREPTQLGVDRWVGAVGAHRWLPRDTLLVVTAGTATTLDIVTVAAEGGARFEGGLILPGLALMLGTLARNTAQLPALDVGEAGSVAGAQRRWADNTHDAIAAGCLAAQAGAIERTWRALGERGDAARPPRCLLSGGARGALAGALAVPFEMHDNLVLLGLHAMAMADA.

9-16 (DIGNTRLK) contacts ATP. Residues Tyr116 and 123–126 (GVDR) contribute to the substrate site. The Proton acceptor role is filled by Asp125. Thr149 lines the ATP pocket. Substrate is bound at residue Thr211.

It belongs to the type III pantothenate kinase family. As to quaternary structure, homodimer. Requires NH4(+) as cofactor. The cofactor is K(+).

It is found in the cytoplasm. It catalyses the reaction (R)-pantothenate + ATP = (R)-4'-phosphopantothenate + ADP + H(+). The protein operates within cofactor biosynthesis; coenzyme A biosynthesis; CoA from (R)-pantothenate: step 1/5. Functionally, catalyzes the phosphorylation of pantothenate (Pan), the first step in CoA biosynthesis. The chain is Type III pantothenate kinase from Cupriavidus taiwanensis (strain DSM 17343 / BCRC 17206 / CCUG 44338 / CIP 107171 / LMG 19424 / R1) (Ralstonia taiwanensis (strain LMG 19424)).